Consider the following 254-residue polypeptide: Alcohol dehydrogenase (254 aa).

10-33 (FVAGLGGIGLDTSREIVKSGPKNL) serves as a coordination point for NAD(+). Ser138 lines the substrate pocket. Tyr151 functions as the Proton acceptor in the catalytic mechanism.

This sequence belongs to the short-chain dehydrogenases/reductases (SDR) family. Homodimer.

It carries out the reaction a primary alcohol + NAD(+) = an aldehyde + NADH + H(+). The catalysed reaction is a secondary alcohol + NAD(+) = a ketone + NADH + H(+). In Drosophila affinidisjuncta (Fruit fly), this protein is Alcohol dehydrogenase (Adh).